Reading from the N-terminus, the 364-residue chain is Serine/threonine-protein kinase ENV7 (364 aa).

3 S-palmitoyl cysteine lipidation sites follow: C13, C14, and C15. The Protein kinase domain occupies 30–364 (YRIQRLLGEG…LLNLLQDLDT (335 aa)). Residues 36–44 (LGEGGMSFV) and K69 contribute to the ATP site. The active-site Proton acceptor is the D215.

Belongs to the protein kinase superfamily. Ser/Thr protein kinase family.

It localises to the vacuole membrane. The catalysed reaction is L-seryl-[protein] + ATP = O-phospho-L-seryl-[protein] + ADP + H(+). It catalyses the reaction L-threonyl-[protein] + ATP = O-phospho-L-threonyl-[protein] + ADP + H(+). Functionally, serine/threonine-protein kinase involved in vacuolar processing and morphology. In Saccharomyces cerevisiae (strain ATCC 204508 / S288c) (Baker's yeast), this protein is Serine/threonine-protein kinase ENV7 (ENV7).